The following is a 307-amino-acid chain: Fructose-bisphosphate aldolase (307 aa).

Ser-49 contributes to the D-glyceraldehyde 3-phosphate binding site. The active-site Proton donor is the Asp-82. The Zn(2+) site is built by His-83, Asp-104, Glu-134, and His-180. Gly-181 is a binding site for dihydroxyacetone phosphate. Residue His-210 coordinates Zn(2+). Dihydroxyacetone phosphate contacts are provided by residues 211 to 213 (GAS) and 253 to 256 (NTDT).

The protein belongs to the class II fructose-bisphosphate aldolase family. Homodimer. The cofactor is Zn(2+).

It carries out the reaction beta-D-fructose 1,6-bisphosphate = D-glyceraldehyde 3-phosphate + dihydroxyacetone phosphate. Its pathway is carbohydrate degradation; glycolysis; D-glyceraldehyde 3-phosphate and glycerone phosphate from D-glucose: step 4/4. Functionally, catalyzes the aldol condensation of dihydroxyacetone phosphate (DHAP or glycerone-phosphate) with glyceraldehyde 3-phosphate (G3P) to form fructose 1,6-bisphosphate (FBP) in gluconeogenesis and the reverse reaction in glycolysis. This is Fructose-bisphosphate aldolase (fba) from Helicobacter pylori (strain ATCC 700392 / 26695) (Campylobacter pylori).